Reading from the N-terminus, the 80-residue chain is Cytochrome c oxidase subunit 7A1, mitochondrial (80 aa).

The transit peptide at Met1 to His21 directs the protein to the mitochondrion. Residues Leu22–Gly46 lie on the Mitochondrial matrix side of the membrane. A helical membrane pass occupies residues Gly47–Ser75. Residues Phe76 to Lys80 are Mitochondrial intermembrane-facing.

This sequence belongs to the cytochrome c oxidase VIIa family. In terms of assembly, component of the complex IV (CIV, cytochrome c oxidase), a multisubunit enzyme composed of 14 subunits. The complex is composed of a catalytic core of 3 subunits MT-CO1, MT-CO2 and MT-CO3, encoded in the mitochondrial DNA, and 11 supernumerary subunits COX4I, COX5A, COX5B, COX6A, COX6B, COX6C, COX7A, COX7B, COX7C, COX8 and NDUFA4, which are encoded in the nuclear genome. The complex exists as a monomer or a dimer and forms supercomplexes (SCs) in the inner mitochondrial membrane with NADH-ubiquinone oxidoreductase (complex I, CI) and ubiquinol-cytochrome c oxidoreductase (cytochrome b-c1 complex, complex III, CIII), resulting in different assemblies (supercomplex SCI(1)III(2)IV(1) and megacomplex MCI(2)III(2)IV(2)).

The protein resides in the mitochondrion inner membrane. It functions in the pathway energy metabolism; oxidative phosphorylation. In terms of biological role, component of the mitochondrial respiratory complex IV (CIV, also named cytochrome c oxidase complex), the last enzyme in the mitochondrial electron transport chain which drives oxidative phosphorylation. The CIV complex is the component of the respiratory chain that catalyzes the reduction of oxygen to water. Acts as an assembly factor that specifically drives the homodimerization of CIV complexes, mediating the formation of mitochondrial respiratory supercomplexes (respirasomes) containing two CIV: supercomplxes with two molecules of CIV show improved activity. Despite being highly expressed in brown adipose tissue, not required for thermogenesis. This is Cytochrome c oxidase subunit 7A1, mitochondrial from Mus musculus (Mouse).